A 266-amino-acid polypeptide reads, in one-letter code: Undecaprenyl-diphosphatase (266 aa).

A run of 8 helical transmembrane segments spans residues 1 to 21 (MDTF…FLPI), 39 to 59 (QGLS…VIYF), 87 to 107 (WWII…KDFI), 111 to 131 (LRSA…LWWA), 149 to 169 (ALLI…RSGA), 183 to 203 (AAAR…AILV), 218 to 238 (ALTL…HYFL), and 246 to 266 (MTPF…FIFL).

It belongs to the UppP family.

The protein localises to the cell inner membrane. It catalyses the reaction di-trans,octa-cis-undecaprenyl diphosphate + H2O = di-trans,octa-cis-undecaprenyl phosphate + phosphate + H(+). Catalyzes the dephosphorylation of undecaprenyl diphosphate (UPP). Confers resistance to bacitracin. In Shewanella sp. (strain MR-4), this protein is Undecaprenyl-diphosphatase.